Reading from the N-terminus, the 350-residue chain is MLSTLKRFGITTGATAAASAKASVIYLFRNETPKSVTIPTPIGLRLEIPVDDYERRGEEYCATVTKFSGDNPDVLNGLKIVSCSTKCDSGIFIEGGNGIGVVTKPGLKVEVGEKAINPIARQMIIDAINEVTTDGVKVRIEVPDGEKIAELTMNKDVGVINGISILGTTGIEYPISDDEYLEHIKSEICVVKALGKKKLILAPGNTSFEFARKRYGDNVVKIGDRVGDSIRLAIEQGFTHIVLVSLPGKITKVASGLMNTHSKYGDARIETLTHAAVLAKLDIEKINKIANSATVTEAITYLLPEERKTLFSIVAKRVLQRLRKIVKNDVKLGVVIISEEGEVLAEEGEL.

The protein belongs to the CbiD family.

It catalyses the reaction Co-precorrin-5B + S-adenosyl-L-methionine = Co-precorrin-6A + S-adenosyl-L-homocysteine. Its pathway is cofactor biosynthesis; adenosylcobalamin biosynthesis; cob(II)yrinate a,c-diamide from sirohydrochlorin (anaerobic route): step 6/10. Catalyzes the methylation of C-1 in cobalt-precorrin-5B to form cobalt-precorrin-6A. This is Cobalt-precorrin-5B C(1)-methyltransferase from Sulfurisphaera tokodaii (strain DSM 16993 / JCM 10545 / NBRC 100140 / 7) (Sulfolobus tokodaii).